A 173-amino-acid polypeptide reads, in one-letter code: MKGFGWLEGLLRVGRKLFVKAETVQYPEVRPYLPPRSRGRIVLTRDPDGQERCVACNLCAVACPVGCIDLAKAVAEDGRWYPEHFRINFARCIFCGYCEEACPTAAIQLTPDFELSEWRRDALVYDKHDLLIAGEGKVRGYRYWSVAGKAIQGKDKGEADHEAPPVDLKGLLP.

2 4Fe-4S ferredoxin-type domains span residues 41-73 and 83-112; these read IVLT…LAKA and EHFR…LTPD. [4Fe-4S] cluster is bound by residues C53, C56, C59, C63, C92, C95, C98, and C102.

Belongs to the complex I 23 kDa subunit family. In terms of assembly, NDH-1 is composed of 14 different subunits. Subunits NuoA, H, J, K, L, M, N constitute the membrane sector of the complex. It depends on [4Fe-4S] cluster as a cofactor.

The protein resides in the cell inner membrane. It catalyses the reaction a quinone + NADH + 5 H(+)(in) = a quinol + NAD(+) + 4 H(+)(out). Its function is as follows. NDH-1 shuttles electrons from NADH, via FMN and iron-sulfur (Fe-S) centers, to quinones in the respiratory chain. The immediate electron acceptor for the enzyme in this species is believed to be ubiquinone. Couples the redox reaction to proton translocation (for every two electrons transferred, four hydrogen ions are translocated across the cytoplasmic membrane), and thus conserves the redox energy in a proton gradient. The chain is NADH-quinone oxidoreductase subunit I 1 from Rhodopseudomonas palustris (strain BisA53).